We begin with the raw amino-acid sequence, 400 residues long: Large envelope protein (400 aa).

Disordered stretches follow at residues 1–50 (MGGW…PHKD) and 84–116 (ILTS…RDTH). Residue glycine 2 is the site of N-myristoyl glycine; by host attachment. The tract at residues 2-119 (GGWSSKPRKG…PPLRDTHPQA (118 aa)) is pre-S1. The interval 2-174 (GGWSSKPRKG…LSTTGDPVPN (173 aa)) is pre-S. Residues 2–181 (GGWSSKPRKG…VPNMENIASG (180 aa)) are Virion surface; in external conformation-facing. At 2–253 (GGWSSKPRKG…PGYRWMCLRR (252 aa)) the chain is on the intravirion; in internal conformation side. Residues 96-106 (STNRQSGRQPT) show a composition bias toward polar residues. The tract at residues 120-174 (VQWNSTTFHQTLQDPRVRALYLPAGGSSSGTVSPAQNTVSAISSILSTTGDPVPN) is pre-S2. Residues 182 to 202 (LLGPLLVLQAGFFSLTKILTI) form a helical membrane-spanning segment. Topologically, residues 203 to 253 (PQSLDSWWTSLNFLGGTPVCLGQNSQSQISSHSPTCCPPICPGYRWMCLRR) are intravirion; in external conformation. A helical membrane pass occupies residues 254–274 (FIIFLCILLLCLIFLLVLLDY). Residues 275–348 (QGMLPVCPLI…WASVRFSWLS (74 aa)) lie on the Virion surface side of the membrane. Asparagine 320 carries N-linked (GlcNAc...) asparagine; by host glycosylation. A helical membrane pass occupies residues 349–369 (LLVPFVQWFVGLSPTVWLSVI). At 370 to 375 (WMMWFW) the chain is on the intravirion side. The chain crosses the membrane as a helical span at residues 376–398 (GPSLYNILSPFMPLLPIFLCLWV). Over 399-400 (YM) the chain is Virion surface.

It belongs to the orthohepadnavirus major surface antigen family. In terms of assembly, li-HBsAg interacts with capsid protein and with HDV Large delta antigen. Isoform M associates with host chaperone CANX through its pre-S2 N glycan. This association may be essential for M proper secretion. Interacts (via its myristoylated pre-S1 region) with the host SLC10A1/NTCP; this interaction is essential for viral entry. Isoform M is N-terminally acetylated by host at a ratio of 90%, and N-glycosylated by host at the pre-S2 region. Post-translationally, myristoylated; this modification is essential for its interaction with the host protein SLC10A1/NTCP.

The protein localises to the virion membrane. The large envelope protein exists in two topological conformations, one which is termed 'external' or Le-HBsAg and the other 'internal' or Li-HBsAg. In its external conformation the protein attaches the virus to cell receptors and thereby initiating infection. This interaction determines the species specificity and liver tropism. This attachment induces virion internalization predominantly through caveolin-mediated endocytosis. The large envelope protein also assures fusion between virion membrane and endosomal membrane. In its internal conformation the protein plays a role in virion morphogenesis and mediates the contact with the nucleocapsid like a matrix protein. In terms of biological role, the middle envelope protein plays an important role in the budding of the virion. It is involved in the induction of budding in a nucleocapsid independent way. In this process the majority of envelope proteins bud to form subviral lipoprotein particles of 22 nm of diameter that do not contain a nucleocapsid. In Homo sapiens (Human), this protein is Large envelope protein.